The following is a 138-amino-acid chain: Small ribosomal subunit protein uS11c (138 aa).

A disordered region spans residues 1-22; that stretch reads MAKSIPRISSRRNGRIGSGNNV.

Belongs to the universal ribosomal protein uS11 family. As to quaternary structure, part of the 30S ribosomal subunit.

It is found in the plastid. The sequence is that of Small ribosomal subunit protein uS11c from Cuscuta reflexa (Southern Asian dodder).